A 395-amino-acid polypeptide reads, in one-letter code: Altered inheritance of mitochondria protein 39, mitochondrial (395 aa).

A helical transmembrane segment spans residues 156 to 176; sequence QIWSAIFGGIFGVILGYSLIY.

This sequence belongs to the AIM39 family.

Its subcellular location is the mitochondrion membrane. The sequence is that of Altered inheritance of mitochondria protein 39, mitochondrial (AIM39) from Saccharomyces cerevisiae (strain RM11-1a) (Baker's yeast).